We begin with the raw amino-acid sequence, 848 residues long: F-BAR domain only protein 2 (848 aa).

The F-BAR domain maps to 4 to 250 (PYFLENFWGN…NMENTSVESL (247 aa)). The stretch at 87 to 114 (HMELVRKLQELIKEVQKYVDEQAKNHKK) forms a coiled coil. Disordered stretches follow at residues 292–316 (IPGR…NASN) and 404–526 (LSPT…RAES). Residues serine 405 and serine 417 each carry the phosphoserine modification. Residues 445–460 (PFGPTSTGSSSSLPQS) are compositionally biased toward low complexity. The 269-residue stretch at 580–848 (ALPIAVAFTE…FATGRYMADC (269 aa)) folds into the MHD domain.

The protein belongs to the FCHO family. Homodimer.

It is found in the membrane. The protein localises to the clathrin-coated pit. In terms of biological role, may function in an early step of clathrin-mediated endocytosis. This Danio rerio (Zebrafish) protein is F-BAR domain only protein 2 (fcho2).